The following is a 405-amino-acid chain: GTPase Obg (405 aa).

The Obg domain occupies 1 to 159; the sequence is MKFVDEVSIF…RDLKLELKVL (159 aa). Residues 127-148 are disordered; sequence NTRFKSSTNRAPRQTTPGKPGD. Residues 129 to 143 are compositionally biased toward polar residues; sequence RFKSSTNRAPRQTTP. The 174-residue stretch at 160–333 folds into the OBG-type G domain; it reads ADVGLLGLPN…LSQAIMRYLD (174 aa). Residues 166-173, 191-195, 213-216, 283-286, and 314-316 contribute to the GTP site; these read GLPNAGKS, FTTLV, DIPG, NKAD, and SAL. Residues Ser173 and Thr193 each coordinate Mg(2+). Residues 373-405 form a disordered region; sequence LRRAGVKSVEEADDDDFDDDDDDEGGAEIIYVR. The span at 383–398 shows a compositional bias: acidic residues; it reads EADDDDFDDDDDDEGG.

This sequence belongs to the TRAFAC class OBG-HflX-like GTPase superfamily. OBG GTPase family. As to quaternary structure, monomer. The cofactor is Mg(2+).

The protein localises to the cytoplasm. An essential GTPase which binds GTP, GDP and possibly (p)ppGpp with moderate affinity, with high nucleotide exchange rates and a fairly low GTP hydrolysis rate. Plays a role in control of the cell cycle, stress response, ribosome biogenesis and in those bacteria that undergo differentiation, in morphogenesis control. This Stutzerimonas stutzeri (strain A1501) (Pseudomonas stutzeri) protein is GTPase Obg.